A 239-amino-acid polypeptide reads, in one-letter code: Transcriptional regulatory protein BtsR (239 aa).

A Response regulatory domain is found at 3 to 116 (KVLIVDDEPL…RLEKTLARLR (114 aa)). Asp-54 bears the 4-aspartylphosphate mark. The HTH LytTR-type domain maps to 137-239 (IPCTGHSRIY…LKSLKEAIGL (103 aa)).

Post-translationally, phosphorylated by BtsS.

Functionally, member of the two-component regulatory system BtsS/BtsR. BtsR regulates expression of btsT by binding to its promoter region. This Escherichia coli O6:H1 (strain CFT073 / ATCC 700928 / UPEC) protein is Transcriptional regulatory protein BtsR.